The following is a 283-amino-acid chain: 4-diphosphocytidyl-2-C-methyl-D-erythritol kinase (283 aa).

The active site involves lysine 10. An ATP-binding site is contributed by proline 95 to serine 105. Aspartate 137 is an active-site residue.

It belongs to the GHMP kinase family. IspE subfamily.

The enzyme catalyses 4-CDP-2-C-methyl-D-erythritol + ATP = 4-CDP-2-C-methyl-D-erythritol 2-phosphate + ADP + H(+). Its pathway is isoprenoid biosynthesis; isopentenyl diphosphate biosynthesis via DXP pathway; isopentenyl diphosphate from 1-deoxy-D-xylulose 5-phosphate: step 3/6. In terms of biological role, catalyzes the phosphorylation of the position 2 hydroxy group of 4-diphosphocytidyl-2C-methyl-D-erythritol. The sequence is that of 4-diphosphocytidyl-2-C-methyl-D-erythritol kinase from Limosilactobacillus fermentum (strain NBRC 3956 / LMG 18251) (Lactobacillus fermentum).